An 83-amino-acid chain; its full sequence is Small ribosomal subunit protein bS16 (83 aa).

The protein belongs to the bacterial ribosomal protein bS16 family.

This Borrelia hermsii (strain HS1 / DAH) protein is Small ribosomal subunit protein bS16.